Here is a 291-residue protein sequence, read N- to C-terminus: Urease accessory protein UreD (291 aa).

This sequence belongs to the UreD family. UreD, UreF and UreG form a complex that acts as a GTP-hydrolysis-dependent molecular chaperone, activating the urease apoprotein by helping to assemble the nickel containing metallocenter of UreC. The UreE protein probably delivers the nickel.

The protein resides in the cytoplasm. Required for maturation of urease via the functional incorporation of the urease nickel metallocenter. This is Urease accessory protein UreD from Acinetobacter baumannii (strain ACICU).